Here is a 508-residue protein sequence, read N- to C-terminus: Abl interactor 1 (508 aa).

Ala2 is modified (N-acetylalanine). The segment at Ala18–Gln79 is required for binding to WASF1. Positions Lys45–Arg107 constitute a t-SNARE coiled-coil homology domain. Phosphotyrosine is present on Tyr53. Disordered regions lie at residues Lys159–Leu290, Ala306–Gln375, and Asn388–Tyr421. The span at Gly161–Asn175 shows a compositional bias: polar residues. Phosphothreonine occurs at positions 174 and 178. Residues Ser183 and Ser187 each carry the phosphoserine modification. Tyr213 is subject to Phosphotyrosine; by ABL1. Thr215 is modified (phosphothreonine). A phosphoserine mark is found at Ser216, Ser222, and Ser225. Residues Ser222–Arg235 show a composition bias toward polar residues. A compositionally biased stretch (low complexity) spans Ser248–Gly258. Over residues Val278–Leu290 the composition is skewed to pro residues. Polar residues predominate over residues Pro307–Asn322. Phosphoserine occurs at positions 319 and 323. Residues Pro337–Pro347 show a composition bias toward polar residues. Pro residues-rich tracts occupy residues Pro393–Asp403 and Ser410–Val419. The SH3 domain maps to Asn446–His505. The residue at position 455 (Tyr455) is a Phosphotyrosine. The residue at position 466 (Ser466) is a Phosphoserine. Position 507 is a phosphothreonine (Thr507).

Belongs to the ABI family. Interacts with ABL1, ENAH, STX1A, SNAP25, VAMP2, EPS8, and through its N-terminus with WASF1. Part of a complex consisting of ABI1, STX1A and SNAP25. Part of a complex consisting of ABI1, EPS8 and SOS1. Interacts with SOS1, SOS2, GRB2, SPTA1 and the first SH3 domain of NCK1. Isoform 6 does not interact with NCK1. Component of the WAVE2 complex composed of ABI1, CYFIP1/SRA1, NCKAP1/NAP1 (NCKAP1l/HEM1 in hematopoietic cells) and WASF2/WAVE2. Interacts (via SH3 domain) with SHANK2 and SHANK3, but not SHANK1; the interaction is direct. Interacts with the heterodimer MYC:MAX; the interaction may enhance MYC:MAX transcriptional activity. Interacts with FNBP1L (via the SH3 domain), WASF2, and CDC42, but only in the presence of FNBP1L. As to quaternary structure, (Microbial infection) Interacts with human cytomegalovirus/HHV-5 protein UL135. In terms of processing, phosphorylated on tyrosine residues after serum stimulation or induction by v-Abl. Seems to be phosphorylated at Tyr-53 by ABL1, required for nuclear but not for synaptic localization. As to expression, widely expressed, with highest expression in brain.

It is found in the cytoplasm. The protein resides in the nucleus. The protein localises to the cell projection. Its subcellular location is the lamellipodium. It localises to the filopodium. It is found in the growth cone. The protein resides in the postsynaptic density. The protein localises to the cytoskeleton. In terms of biological role, may act in negative regulation of cell growth and transformation by interacting with nonreceptor tyrosine kinases ABL1 and/or ABL2. May play a role in regulation of EGF-induced Erk pathway activation. Involved in cytoskeletal reorganization and EGFR signaling. Together with EPS8 participates in transduction of signals from Ras to Rac. In vitro, a trimeric complex of ABI1, EPS8 and SOS1 exhibits Rac specific guanine nucleotide exchange factor (GEF) activity and ABI1 seems to act as an adapter in the complex. Regulates ABL1/c-Abl-mediated phosphorylation of ENAH. Recruits WASF1 to lamellipodia and there seems to regulate WASF1 protein level. In brain, seems to regulate the dendritic outgrowth and branching as well as to determine the shape and number of synaptic contacts of developing neurons. The sequence is that of Abl interactor 1 from Homo sapiens (Human).